Here is a 585-residue protein sequence, read N- to C-terminus: Arginine--tRNA ligase (585 aa).

The 'HIGH' region signature appears at 131 to 141 (ANPTGPMHVGH).

Belongs to the class-I aminoacyl-tRNA synthetase family. As to quaternary structure, monomer.

Its subcellular location is the cytoplasm. It carries out the reaction tRNA(Arg) + L-arginine + ATP = L-arginyl-tRNA(Arg) + AMP + diphosphate. This is Arginine--tRNA ligase from Brucella ovis (strain ATCC 25840 / 63/290 / NCTC 10512).